Consider the following 425-residue polypeptide: MKEIIRSIKGMHDYIPDDVITWQYIEYIVKRILKNYCYNEIRFPLIEKTSLFAHSIGNITDIIEKEMYSFKDKKNKKITLRPEGTIGCMRACINKGLLRTSKQKLWYLGPMFRYERPQHGRYRQFHQFGIEVLGMSGPDIDLEIILLVERILRTLNISNYVQLELNSIGSYESRLHYKKILFSYFKQYEACLDEDCKRRLYVNPLRILDSKDKNIKAIINNAPILMDFIDDNSLIHFENLCKLMKNIGISYVVNYKLVRGLDYYNKTVFEWKTNLLGAKDAICAGGRYDNLSKSLGVTFIPAIGCAIGMERLVLLIKSLKLKPKTNNAIDVFIIFLKDNIQIEAIKLSELVRTQFPKKKIMLSILSSNLRKQFSTANKIKARIVLLLGPNEVKNNLILLKDLTSGYQKSFLKNKIIEELELAFKN.

This sequence belongs to the class-II aminoacyl-tRNA synthetase family. As to quaternary structure, homodimer.

It is found in the cytoplasm. The enzyme catalyses tRNA(His) + L-histidine + ATP = L-histidyl-tRNA(His) + AMP + diphosphate + H(+). This chain is Histidine--tRNA ligase, found in Buchnera aphidicola subsp. Baizongia pistaciae (strain Bp).